The sequence spans 702 residues: Flagellar operon control protein UmoB (702 aa).

Transmembrane regions (helical) follow at residues 4 to 24 (SVIILAIFMISLFIMAAFLFF), 204 to 224 (GFWNGSLICLGLILWLTALMM), 227 to 247 (VFLPWIMAAGGTFLVLGLFLI), 343 to 363 (IIFVVCSLFIIGMLYLYQPLS), and 656 to 676 (GNTLLLFFAIGFLILNLFFII).

Belongs to the IgaA family.

It is found in the cell inner membrane. Its function is as follows. Up-regulator of flagellar flhDC master operon. This is Flagellar operon control protein UmoB (umoB) from Proteus mirabilis.